We begin with the raw amino-acid sequence, 867 residues long: Cation/H(+) antiporter 23, chloroplastic (867 aa).

The next 12 membrane-spanning stretches (helical) occupy residues 43 to 63 (SGST…VANL), 75 to 95 (LYLP…PSVL), 112 to 132 (MVLE…LGLG), 146 to 166 (VIIA…LYYL), 175 to 195 (IISG…PDLA), 212 to 232 (AMCA…FGFA), 242 to 262 (KMMP…IFVI), 283 to 303 (HVWF…ACGV), 336 to 356 (GILM…GFML), 362 to 382 (FMMV…TVIT), 393 to 413 (AFAI…VLNA), and 427 to 447 (HMTI…AFAY). The tract at residues 848 to 867 (SMYEDEDEDDEEDHQYGIHR) is disordered. Residues 851-860 (EDEDEDDEED) show a composition bias toward acidic residues.

Belongs to the monovalent cation:proton antiporter 2 (CPA2) transporter (TC 2.A.37) family. CHX (TC 2.A.37.4) subfamily. Specifically expressed in flower buds and pollen. Expressed in leaves, roots and stems.

The protein localises to the plastid. It is found in the chloroplast membrane. It localises to the endoplasmic reticulum membrane. In terms of biological role, operates as a K(+)/H(+) antiporter or Na(+)/H(+) antiporter of the chloroplast envelope that functions in pH homeostasis and chloroplast development. Monovalent cation transporter with a preference for Cs(+), K(+) and Rb(+) relative to Na(+) or Li(+). Required for pollen tube guidance, but not for normal pollen development. May also be involved in the development or function of the female gametophyte. In Arabidopsis thaliana (Mouse-ear cress), this protein is Cation/H(+) antiporter 23, chloroplastic (CHX23).